Consider the following 117-residue polypeptide: Transcription elongation factor A protein-like 8 (117 aa).

Composition is skewed to basic and acidic residues over residues 1-24 (MQKS…DRPL) and 61-74 (YKED…DPEE). The interval 1–74 (MQKSCGENER…SPVRHLDPEE (74 aa)) is disordered. Residues 73 to 100 (EEMIRGADELERLREEIRRVRNKFVMMH) are a coiled coil.

This sequence belongs to the TFS-II family. TFA subfamily.

The protein resides in the nucleus. Functionally, may be involved in transcriptional regulation. The protein is Transcription elongation factor A protein-like 8 (TCEAL8) of Bos taurus (Bovine).